A 414-amino-acid polypeptide reads, in one-letter code: Isocitrate dehydrogenase [NADP] cytoplasmic (414 aa).

An N-acetylserine modification is found at Ser2. Position 42 is a phosphotyrosine (Tyr42). An NADP(+)-binding site is contributed by 75–77; that stretch reads TIT. Thr77 contributes to the substrate binding site. At Lys81 the chain carries N6-acetyllysine. NADP(+) is bound at residue Arg82. Substrate is bound by residues 94–100 and Arg109; that span reads SPNGTIR. N6-succinyllysine is present on Lys126. Substrate contacts are provided by Arg132 and Lys212. Lys224, Lys233, and Lys243 each carry N6-acetyllysine. Asp252 serves as a coordination point for Mn(2+). NADP(+) is bound at residue Lys260. 2 residues coordinate Mn(2+): Asp275 and Asp279. 310–315 contributes to the NADP(+) binding site; that stretch reads GTVTRH. Residue Lys321 is modified to N6-acetyllysine. Asn328 is an NADP(+) binding site. A Phosphoserine modification is found at Ser389. Lys400 bears the N6-succinyllysine mark.

The protein belongs to the isocitrate and isopropylmalate dehydrogenases family. As to quaternary structure, homodimer. Mg(2+) serves as cofactor. The cofactor is Mn(2+). In terms of processing, acetylation at Lys-374 dramatically reduces catalytic activity. Highly expressed in the liver followed by kidney, lower expression in spleen, brain and lung.

The protein localises to the cytoplasm. The protein resides in the cytosol. It carries out the reaction D-threo-isocitrate + NADP(+) = 2-oxoglutarate + CO2 + NADPH. With respect to regulation, irreversibly inhibited by Cd(2+) concentrations above 50 uM. Functionally, catalyzes the NADP(+)-dependent oxidative decarboxylation of isocitrate (D-threo-isocitrate) to 2-ketoglutarate (2-oxoglutarate), which is required by other enzymes such as the phytanoyl-CoA dioxygenase. Plays a critical role in the generation of NADPH, an important cofactor in many biosynthesis pathways. May act as a corneal epithelial crystallin and may be involved in maintaining corneal epithelial transparency. This is Isocitrate dehydrogenase [NADP] cytoplasmic (Idh1) from Mus musculus (Mouse).